Reading from the N-terminus, the 36-residue chain is Photosystem I reaction center subunit VIII (36 aa).

Residues 5-27 (FLPSILVPLVGLVFPAIAIASLF) traverse the membrane as a helical segment.

This sequence belongs to the PsaI family.

It localises to the plastid. It is found in the chloroplast thylakoid membrane. Functionally, may help in the organization of the PsaL subunit. The chain is Photosystem I reaction center subunit VIII from Chaetosphaeridium globosum (Charophycean green alga).